The sequence spans 611 residues: Threonine--tRNA ligase (611 aa).

Residues 211-509 (DHRKLGTELE…LTEHYAGEFP (299 aa)) are catalytic. 3 residues coordinate Zn(2+): Cys310, His361, and His486.

This sequence belongs to the class-II aminoacyl-tRNA synthetase family. In terms of assembly, homodimer. Requires Zn(2+) as cofactor.

It is found in the cytoplasm. The enzyme catalyses tRNA(Thr) + L-threonine + ATP = L-threonyl-tRNA(Thr) + AMP + diphosphate + H(+). In terms of biological role, catalyzes the attachment of threonine to tRNA(Thr) in a two-step reaction: L-threonine is first activated by ATP to form Thr-AMP and then transferred to the acceptor end of tRNA(Thr). Also edits incorrectly charged L-seryl-tRNA(Thr). The polypeptide is Threonine--tRNA ligase (Nautilia profundicola (strain ATCC BAA-1463 / DSM 18972 / AmH)).